Reading from the N-terminus, the 81-residue chain is Acyl carrier protein (81 aa).

The region spanning 2-80 (ASKEEILAGL…DAVDFIDGAQ (79 aa)) is the Carrier domain. Residue S40 is modified to O-(pantetheine 4'-phosphoryl)serine.

It belongs to the acyl carrier protein (ACP) family. In terms of processing, 4'-phosphopantetheine is transferred from CoA to a specific serine of apo-ACP by AcpS. This modification is essential for activity because fatty acids are bound in thioester linkage to the sulfhydryl of the prosthetic group.

The protein localises to the cytoplasm. It participates in lipid metabolism; fatty acid biosynthesis. Carrier of the growing fatty acid chain in fatty acid biosynthesis. The protein is Acyl carrier protein of Micrococcus luteus (strain ATCC 4698 / DSM 20030 / JCM 1464 / CCM 169 / CCUG 5858 / IAM 1056 / NBRC 3333 / NCIMB 9278 / NCTC 2665 / VKM Ac-2230) (Micrococcus lysodeikticus).